The sequence spans 90 residues: c-Myc-binding protein homolog (90 aa).

Belongs to the AMY1 family.

It localises to the nucleus. The chain is c-Myc-binding protein homolog (mycbp) from Dictyostelium discoideum (Social amoeba).